An 89-amino-acid polypeptide reads, in one-letter code: Small ribosomal subunit protein uS15 (89 aa).

The protein belongs to the universal ribosomal protein uS15 family. As to quaternary structure, part of the 30S ribosomal subunit. Forms a bridge to the 50S subunit in the 70S ribosome, contacting the 23S rRNA.

Functionally, one of the primary rRNA binding proteins, it binds directly to 16S rRNA where it helps nucleate assembly of the platform of the 30S subunit by binding and bridging several RNA helices of the 16S rRNA. In terms of biological role, forms an intersubunit bridge (bridge B4) with the 23S rRNA of the 50S subunit in the ribosome. The chain is Small ribosomal subunit protein uS15 from Acinetobacter baylyi (strain ATCC 33305 / BD413 / ADP1).